A 42-amino-acid chain; its full sequence is Small protein MntS (42 aa).

It localises to the cytoplasm. Its function is as follows. Required for repression of mntH by MntR. May function as a chaperone that makes manganese more available by delivering it to the necessary cellular locations when manganese is limiting. The chain is Small protein MntS (mntS) from Escherichia coli (strain K12).